Reading from the N-terminus, the 89-residue chain is Small ribosomal subunit protein uS15 (89 aa).

The protein belongs to the universal ribosomal protein uS15 family. In terms of assembly, part of the 30S ribosomal subunit. Forms a bridge to the 50S subunit in the 70S ribosome, contacting the 23S rRNA.

One of the primary rRNA binding proteins, it binds directly to 16S rRNA where it helps nucleate assembly of the platform of the 30S subunit by binding and bridging several RNA helices of the 16S rRNA. Functionally, forms an intersubunit bridge (bridge B4) with the 23S rRNA of the 50S subunit in the ribosome. The chain is Small ribosomal subunit protein uS15 from Lactobacillus gasseri (strain ATCC 33323 / DSM 20243 / BCRC 14619 / CIP 102991 / JCM 1131 / KCTC 3163 / NCIMB 11718 / NCTC 13722 / AM63).